The primary structure comprises 498 residues: Glutamyl-tRNA(Gln) amidotransferase subunit A (498 aa).

Catalysis depends on charge relay system residues K80 and S155. Residues 132–159 (SSTENSAYGPTRNPWDTDRVPGGSSGGS) are disordered. The active-site Acyl-ester intermediate is S179.

Belongs to the amidase family. GatA subfamily. In terms of assembly, heterotrimer of A, B and C subunits.

The enzyme catalyses L-glutamyl-tRNA(Gln) + L-glutamine + ATP + H2O = L-glutaminyl-tRNA(Gln) + L-glutamate + ADP + phosphate + H(+). Its function is as follows. Allows the formation of correctly charged Gln-tRNA(Gln) through the transamidation of misacylated Glu-tRNA(Gln) in organisms which lack glutaminyl-tRNA synthetase. The reaction takes place in the presence of glutamine and ATP through an activated gamma-phospho-Glu-tRNA(Gln). This Thermobifida fusca (strain YX) protein is Glutamyl-tRNA(Gln) amidotransferase subunit A.